Consider the following 148-residue polypeptide: Large ribosomal subunit protein bL9 (148 aa).

It belongs to the bacterial ribosomal protein bL9 family.

Its function is as follows. Binds to the 23S rRNA. This chain is Large ribosomal subunit protein bL9, found in Bacillus cereus (strain ATCC 10987 / NRS 248).